The following is an 803-amino-acid chain: DNA polymerase 2 (803 aa).

It belongs to the DNA polymerase type-B family.

It carries out the reaction DNA(n) + a 2'-deoxyribonucleoside 5'-triphosphate = DNA(n+1) + diphosphate. The sequence is that of DNA polymerase 2 (polB) from Aeropyrum pernix (strain ATCC 700893 / DSM 11879 / JCM 9820 / NBRC 100138 / K1).